Reading from the N-terminus, the 367-residue chain is Oleoyl-acyl carrier protein thioesterase 2, chloroplastic (367 aa).

The N-terminal 48 residues, 1-48 (MLKLSCNVTDHIHNLFSNSRRIFVPVHRQTRPISCFQLKKEPLRAILS), are a transit peptide targeting the chloroplast. Residues N263, H265, and C300 contribute to the active site.

The protein belongs to the acyl-ACP thioesterase family.

Its subcellular location is the plastid. The protein localises to the chloroplast. The enzyme catalyses (9Z)-octadecenoyl-[ACP] + H2O = (9Z)-octadecenoate + holo-[ACP] + H(+). In terms of biological role, plays an essential role in chain termination during de novo fatty acid synthesis. Possesses high thioesterase activity for oleoyl-ACP versus other acyl-ACPs. The protein is Oleoyl-acyl carrier protein thioesterase 2, chloroplastic (FATA2) of Arabidopsis thaliana (Mouse-ear cress).